The following is a 203-amino-acid chain: ATP-dependent Clp protease proteolytic subunit (203 aa).

S103 acts as the Nucleophile in catalysis. Residue H128 is part of the active site.

This sequence belongs to the peptidase S14 family. Fourteen ClpP subunits assemble into 2 heptameric rings which stack back to back to give a disk-like structure with a central cavity, resembling the structure of eukaryotic proteasomes.

Its subcellular location is the cytoplasm. It carries out the reaction Hydrolysis of proteins to small peptides in the presence of ATP and magnesium. alpha-casein is the usual test substrate. In the absence of ATP, only oligopeptides shorter than five residues are hydrolyzed (such as succinyl-Leu-Tyr-|-NHMec, and Leu-Tyr-Leu-|-Tyr-Trp, in which cleavage of the -Tyr-|-Leu- and -Tyr-|-Trp bonds also occurs).. In terms of biological role, cleaves peptides in various proteins in a process that requires ATP hydrolysis. Has a chymotrypsin-like activity. Plays a major role in the degradation of misfolded proteins. The sequence is that of ATP-dependent Clp protease proteolytic subunit from Dichelobacter nodosus (strain VCS1703A).